We begin with the raw amino-acid sequence, 649 residues long: Probable potassium transport system protein Kup (649 aa).

The next 12 helical transmembrane spans lie at 1-21 (MAIV…LYTM), 42-62 (ILSL…VFIA), 84-104 (GAWL…DSVL), 126-146 (IMSG…VCLF), 159-179 (TFGT…LVNL), 195-215 (VEFL…TVFL), 235-255 (IYFT…GQGA), 286-306 (VAVL…ITGA), 334-354 (LYIP…LAMF), 364-384 (YGLA…VYIW), 390-410 (VGAV…FFAS), and 414-434 (FLHG…IMYT).

Belongs to the HAK/KUP transporter (TC 2.A.72) family.

The protein localises to the cell membrane. The enzyme catalyses K(+)(in) + H(+)(in) = K(+)(out) + H(+)(out). In terms of biological role, transport of potassium into the cell. Likely operates as a K(+):H(+) symporter. This is Probable potassium transport system protein Kup from Bifidobacterium adolescentis (strain ATCC 15703 / DSM 20083 / NCTC 11814 / E194a).